A 292-amino-acid polypeptide reads, in one-letter code: Large ribosomal subunit protein bL19m (292 aa).

The interval Ser41–Pro60 is disordered. Ser77 is modified (phosphoserine).

This sequence belongs to the bacterial ribosomal protein bL19 family. As to quaternary structure, component of the mitochondrial ribosome large subunit (39S) which comprises a 16S rRNA and about 50 distinct proteins.

Its subcellular location is the mitochondrion. The chain is Large ribosomal subunit protein bL19m (Mrpl19) from Mus musculus (Mouse).